The sequence spans 95 residues: Aspartyl/glutamyl-tRNA(Asn/Gln) amidotransferase subunit C (95 aa).

The protein belongs to the GatC family. In terms of assembly, heterotrimer of A, B and C subunits.

The enzyme catalyses L-glutamyl-tRNA(Gln) + L-glutamine + ATP + H2O = L-glutaminyl-tRNA(Gln) + L-glutamate + ADP + phosphate + H(+). It catalyses the reaction L-aspartyl-tRNA(Asn) + L-glutamine + ATP + H2O = L-asparaginyl-tRNA(Asn) + L-glutamate + ADP + phosphate + 2 H(+). Allows the formation of correctly charged Asn-tRNA(Asn) or Gln-tRNA(Gln) through the transamidation of misacylated Asp-tRNA(Asn) or Glu-tRNA(Gln) in organisms which lack either or both of asparaginyl-tRNA or glutaminyl-tRNA synthetases. The reaction takes place in the presence of glutamine and ATP through an activated phospho-Asp-tRNA(Asn) or phospho-Glu-tRNA(Gln). This chain is Aspartyl/glutamyl-tRNA(Asn/Gln) amidotransferase subunit C, found in Geobacter sulfurreducens (strain ATCC 51573 / DSM 12127 / PCA).